The sequence spans 779 residues: Molybdenum cofactor sulfurase (779 aa).

Lys247 carries the N6-(pyridoxal phosphate)lysine modification. The active site involves Cys409. Residues 624–779 form the MOSC domain; it reads SQSLGLEGVR…LTCGDVIVVS (156 aa). Position 732 is a phosphoserine (Ser732).

This sequence belongs to the class-V pyridoxal-phosphate-dependent aminotransferase family. MOCOS subfamily. Requires pyridoxal 5'-phosphate as cofactor.

The catalysed reaction is Mo-molybdopterin + L-cysteine + AH2 = thio-Mo-molybdopterin + L-alanine + A + H2O. It participates in cofactor biosynthesis; molybdopterin biosynthesis. Its function is as follows. Sulfurates the molybdenum cofactor. Sulfation of molybdenum is essential for xanthine dehydrogenase (XDH) and aldehyde oxidase (ADO) enzymes in which molybdenum cofactor is liganded by 1 oxygen and 1 sulfur atom in active form. The polypeptide is Molybdenum cofactor sulfurase (Drosophila mojavensis (Fruit fly)).